The following is a 373-amino-acid chain: ATP phosphoribosyltransferase regulatory subunit (373 aa).

The protein belongs to the class-II aminoacyl-tRNA synthetase family. HisZ subfamily. In terms of assembly, heteromultimer composed of HisG and HisZ subunits.

Its subcellular location is the cytoplasm. Its pathway is amino-acid biosynthesis; L-histidine biosynthesis; L-histidine from 5-phospho-alpha-D-ribose 1-diphosphate: step 1/9. In terms of biological role, required for the first step of histidine biosynthesis. May allow the feedback regulation of ATP phosphoribosyltransferase activity by histidine. This Rhizobium johnstonii (strain DSM 114642 / LMG 32736 / 3841) (Rhizobium leguminosarum bv. viciae) protein is ATP phosphoribosyltransferase regulatory subunit.